Here is a 328-residue protein sequence, read N- to C-terminus: Glycerol-3-phosphate dehydrogenase [NAD(P)+] (328 aa).

NADPH-binding residues include Trp15, Arg35, Arg36, and Lys105. Sn-glycerol 3-phosphate-binding residues include Lys105 and Gly131. NADPH is bound at residue Ala135. Sn-glycerol 3-phosphate contacts are provided by Lys186, Asp239, Ser249, Arg250, and Asn251. Lys186 (proton acceptor) is an active-site residue. Arg250 contributes to the NADPH binding site. Residues Val270 and Glu272 each contribute to the NADPH site.

It belongs to the NAD-dependent glycerol-3-phosphate dehydrogenase family.

The protein resides in the cytoplasm. The enzyme catalyses sn-glycerol 3-phosphate + NAD(+) = dihydroxyacetone phosphate + NADH + H(+). It carries out the reaction sn-glycerol 3-phosphate + NADP(+) = dihydroxyacetone phosphate + NADPH + H(+). The protein operates within membrane lipid metabolism; glycerophospholipid metabolism. In terms of biological role, catalyzes the reduction of the glycolytic intermediate dihydroxyacetone phosphate (DHAP) to sn-glycerol 3-phosphate (G3P), the key precursor for phospholipid synthesis. This Deinococcus radiodurans (strain ATCC 13939 / DSM 20539 / JCM 16871 / CCUG 27074 / LMG 4051 / NBRC 15346 / NCIMB 9279 / VKM B-1422 / R1) protein is Glycerol-3-phosphate dehydrogenase [NAD(P)+].